Consider the following 359-residue polypeptide: Homeotic protein knotted-1 (359 aa).

2 disordered regions span residues 1-34 and 213-232; these read MEEI…PWAS and LSSG…TELP. Positions 16–31 are enriched in basic residues; it reads GHGHGQHHHHHHHHHP. One can recognise an ELK domain in the interval 242–262; the sequence is ELKHHLLKKYSGYLSSLKQEL. Residues 263 to 326 constitute a DNA-binding region (homeobox; TALE-type); that stretch reads SKKKKKGKLP…NQRKRHWKPS (64 aa).

Belongs to the TALE/KNOX homeobox family. In terms of assembly, forms homodimers. Binds to MBP2C; this interaction reduces RNA binding capacity. In terms of tissue distribution, expressed in apical meristems of vegetative and floral stems as well as in the underlying ground meristem. Specifically expressed in vascular bundles developing both in the leaf and stem. Very low levels of expression in leaves.

It localises to the nucleus. It is found in the cell junction. Its subcellular location is the plasmodesma. The protein resides in the cytoplasm. In terms of biological role, binds to RNA. Possible transcription factor that regulates genes involved in development. Mutations in KN-1 alter leaf development. Foci of cells along the lateral vein do not differentiate properly but continue to divide, forming knots. May participate in the switch from indeterminate to determinate cell fates. Probably binds to the DNA sequence 5'-TGAC-3'. The sequence is that of Homeotic protein knotted-1 (KN-1) from Zea mays (Maize).